The following is a 90-amino-acid chain: Probable Fe(2+)-trafficking protein (90 aa).

This sequence belongs to the Fe(2+)-trafficking protein family.

Could be a mediator in iron transactions between iron acquisition and iron-requiring processes, such as synthesis and/or repair of Fe-S clusters in biosynthetic enzymes. The chain is Probable Fe(2+)-trafficking protein from Azotobacter vinelandii (strain DJ / ATCC BAA-1303).